A 435-amino-acid chain; its full sequence is AP-2 complex subunit mu (435 aa).

The 265-residue stretch at 170 to 434 folds into the MHD domain; that stretch reads RNELFLDVLE…IGRSGIYETR (265 aa). Residues lysine 341, lysine 345, and lysine 354 each coordinate a 1,2-diacyl-sn-glycero-3-phospho-(1D-myo-inositol-3,4,5-trisphosphate).

The protein belongs to the adaptor complexes medium subunit family. As to quaternary structure, adaptor protein complex 2 (AP-2) is a heterotetramer composed of two large adaptins (alpha-type subunit and beta-type subunit), a medium adaptin (mu-type subunit) and a small adaptin (sigma-type subunit).

It localises to the cell membrane. The protein localises to the membrane. It is found in the coated pit. Component of the adaptor complexes which link clathrin to receptors in coated vesicles. Clathrin-associated protein complexes are believed to interact with the cytoplasmic tails of membrane proteins, leading to their selection and concentration. AP50 is a subunit of the plasma membrane adaptor. The complex binds polyphosphoinositide-containing lipids. In Xenopus laevis (African clawed frog), this protein is AP-2 complex subunit mu (ap2m1).